Here is an 874-residue protein sequence, read N- to C-terminus: Alanine--tRNA ligase (874 aa).

4 residues coordinate Zn(2+): His562, His566, Cys665, and His669.

Belongs to the class-II aminoacyl-tRNA synthetase family. Zn(2+) is required as a cofactor.

The protein localises to the cytoplasm. The enzyme catalyses tRNA(Ala) + L-alanine + ATP = L-alanyl-tRNA(Ala) + AMP + diphosphate. Functionally, catalyzes the attachment of alanine to tRNA(Ala) in a two-step reaction: alanine is first activated by ATP to form Ala-AMP and then transferred to the acceptor end of tRNA(Ala). Also edits incorrectly charged Ser-tRNA(Ala) and Gly-tRNA(Ala) via its editing domain. The chain is Alanine--tRNA ligase from Pseudomonas fluorescens (strain Pf0-1).